A 434-amino-acid chain; its full sequence is MSIITDVLAREVLDSRGNPTVEVELYTEDGGFGRALVPSGASTGEHEAVELRDGDKDRFGGKGVLKAVGHVNNEIAKAVIGLDVTEQRLIDQTMIDLDGTPNKGKFGANAILGVSLAAARAAADEVGLPLYQYLGGPNAHVLPTPMMNVLNGGAHSTNTVDFQEFMIMPVGAKSVREAVRMGSETFHALQALLKSKGDITAVGDEGGFAPNLKDNEEAFELLVEAIKKAGYKPGDDIALAFDVAASEMYDAESKTYTTKWSNPDKKYTTEEWTDMIDGYINKYPIVSVEDPIDENDWEGWQTFTKKMGDKVQIVGDDLFVTNTDYLKKGIDMGVANSILIKLNQIGTLTETFEAIEMAKEAGYTAVVSHRSGETEDTTIADLVVATNAGQIKTGSMSRTDRIAKYNQLMRIEDQLGAQSLYKGRKSFYNVKAID.

Residue Q163 participates in (2R)-2-phosphoglycerate binding. E205 functions as the Proton donor in the catalytic mechanism. Mg(2+)-binding residues include D242, E289, and D316. K341, R370, S371, and K392 together coordinate (2R)-2-phosphoglycerate. K341 functions as the Proton acceptor in the catalytic mechanism.

Belongs to the enolase family. The cofactor is Mg(2+).

Its subcellular location is the cytoplasm. The protein resides in the secreted. The protein localises to the cell surface. The catalysed reaction is (2R)-2-phosphoglycerate = phosphoenolpyruvate + H2O. It functions in the pathway carbohydrate degradation; glycolysis; pyruvate from D-glyceraldehyde 3-phosphate: step 4/5. Its function is as follows. Catalyzes the reversible conversion of 2-phosphoglycerate (2-PG) into phosphoenolpyruvate (PEP). It is essential for the degradation of carbohydrates via glycolysis. In Lacticaseibacillus paracasei (strain ATCC 334 / BCRC 17002 / CCUG 31169 / CIP 107868 / KCTC 3260 / NRRL B-441) (Lactobacillus paracasei), this protein is Enolase.